The sequence spans 965 residues: Forespore membrane adapter protein MUG56 (965 aa).

The interval Ser70–Ser175 is disordered. A compositionally biased stretch (polar residues) spans Asp82–Thr101. The segment covering Arg102 to Phe114 has biased composition (low complexity). The segment covering Thr124–Glu158 has biased composition (polar residues). Over residues Thr159 to Ser175 the composition is skewed to low complexity. PH domains follow at residues Pro562–Ser737 and Val800–Asn961.

Belongs to the SPO71 family.

The protein localises to the cytoplasm. Its subcellular location is the nucleus. It is found in the prospore membrane. May recruit a lipid transfer protein to the forespore membrane during sporulation, thereby aiding forespore membrane formation. Required for meiosis. This Schizosaccharomyces pombe (strain 972 / ATCC 24843) (Fission yeast) protein is Forespore membrane adapter protein MUG56.